Consider the following 212-residue polypeptide: MSKGFLVSLEGPEGAGKTSVLEALLPILKEKGVEVLTTREPGGVLIGEKIREVILDPSHTQMDAKTELLLYIASRRQHLVEKVLPALEAGKLVIMDRFIDSSVAYQGFGRGLDIEAIDWLNQFATDGLKPDLTLYFDIEVEEGLARIAANSDREVNRLDLEGLDLHKKVRQGYLSLLDKEGNRIVKIDASLPLEQVVETTKAVLFDGMGLAK.

Residue 11 to 18 (GPEGAGKT) participates in ATP binding.

Belongs to the thymidylate kinase family.

It catalyses the reaction dTMP + ATP = dTDP + ADP. Phosphorylation of dTMP to form dTDP in both de novo and salvage pathways of dTTP synthesis. This chain is Thymidylate kinase, found in Streptococcus pneumoniae (strain ATCC 700669 / Spain 23F-1).